The following is a 189-amino-acid chain: GMP synthase [glutamine-hydrolyzing] subunit A (189 aa).

The region spanning 5–189 is the Glutamine amidotransferase type-1 domain; the sequence is KIIVINNYGQ…MNFFKVCEDY (185 aa). Catalysis depends on C79, which acts as the Nucleophile. Catalysis depends on residues H166 and E168.

As to quaternary structure, heterodimer composed of a glutamine amidotransferase subunit (A) and a GMP-binding subunit (B).

The catalysed reaction is XMP + L-glutamine + ATP + H2O = GMP + L-glutamate + AMP + diphosphate + 2 H(+). It functions in the pathway purine metabolism; GMP biosynthesis; GMP from XMP (L-Gln route): step 1/1. In terms of biological role, catalyzes the synthesis of GMP from XMP. This chain is GMP synthase [glutamine-hydrolyzing] subunit A, found in Methanococcoides burtonii (strain DSM 6242 / NBRC 107633 / OCM 468 / ACE-M).